The sequence spans 356 residues: Histidinol-phosphate aminotransferase (356 aa).

N6-(pyridoxal phosphate)lysine is present on K214.

This sequence belongs to the class-II pyridoxal-phosphate-dependent aminotransferase family. Histidinol-phosphate aminotransferase subfamily. As to quaternary structure, homodimer. Pyridoxal 5'-phosphate serves as cofactor.

It catalyses the reaction L-histidinol phosphate + 2-oxoglutarate = 3-(imidazol-4-yl)-2-oxopropyl phosphate + L-glutamate. Its pathway is amino-acid biosynthesis; L-histidine biosynthesis; L-histidine from 5-phospho-alpha-D-ribose 1-diphosphate: step 7/9. This Escherichia coli O6:K15:H31 (strain 536 / UPEC) protein is Histidinol-phosphate aminotransferase.